A 418-amino-acid chain; its full sequence is Creatine kinase U-type, mitochondrial (418 aa).

The N-terminal 39 residues, 1-39, are a transit peptide targeting the mitochondrion; sequence MAGPFSRLLSARPGLRLLALAGAGSLTAGILLRPESVGA. A cardiolipin-binding region spans residues 40–64; the sequence is AAAERRRLYPPSAEYPDLRKHNNCM. In terms of domain architecture, Phosphagen kinase N-terminal spans 46–132; it reads RLYPPSAEYP…FDPVIQERHN (87 aa). Position 152 is a phosphoserine (Ser-152). The Phosphagen kinase C-terminal domain maps to 159 to 401; the sequence is YVLSSRVRTG…NYLIDCERRL (243 aa). 162–166 serves as a coordination point for ATP; that stretch reads SSRVR. A Phosphoserine modification is found at Ser-197. Thr-214 is subject to Phosphothreonine. ATP is bound at residue His-225. Residue Ser-233 is modified to Phosphoserine. ATP is bound by residues Arg-270, Arg-326, and 354 to 359; that span reads RGTGGV. Thr-356 bears the Phosphothreonine mark. Ser-366 bears the Phosphoserine mark. Asp-369 is a binding site for ATP.

It belongs to the ATP:guanido phosphotransferase family. As to quaternary structure, exists as an octamer composed of four MTCK homodimers.

It is found in the mitochondrion inner membrane. It catalyses the reaction creatine + ATP = N-phosphocreatine + ADP + H(+). Functionally, reversibly catalyzes the transfer of phosphate between ATP and various phosphogens (e.g. creatine phosphate). Creatine kinase isoenzymes play a central role in energy transduction in tissues with large, fluctuating energy demands, such as skeletal muscle, heart, brain and spermatozoa. The sequence is that of Creatine kinase U-type, mitochondrial (Ckmt1) from Mus musculus (Mouse).